The sequence spans 526 residues: MPQQLLITLPTEASTWVKLQHPKKAVEGAPLWEDVTKMFEGEALLSQDAEDVKTQRESLEDEVTPGLPTAESQELLTFKDISIDFTQEEWGQLAPAHQNLYREVMLENYSNLVSVGYQLSKPSVISQLEKGEEPWMAEKEGPGDPSSDLKSKIETIESTAKSTISQERLYHGIMMESFMRDDIIYSTLRKVSTYDDVLERHQETCMRDVRQAILTHKKRVQETNKFGENIIVHSNVIIEQRHHKYDTPTKRNTYKLDLINHPTSYIRTKTYECNICEKIFKQPIHLTEHMRIHTGEKPFRCKECGRAFSQSASLSTHQRIHTGEKPFECEECGKAFRHRSSLNQHHRTHTGEKPYVCDKCQKAFSQNISLVQHLRTHSGEKPFTCNECGKTFRQIRHLSEHIRIHTGEKPYACTACCKTFSHRAYLTHHQRIHTGERPYKCKECGKAFRQRIHLSNHKTVHTGVKAYECNRCGKAYRHDSSFKKHQRHHTGEKPYECNECGKAFSYNSSLSRHHEIHRRNAFRNKV.

Positions 1-39 (MPQQLLITLPTEASTWVKLQHPKKAVEGAPLWEDVTKMF) constitute an SCAN box domain. The 72-residue stretch at 76–147 (LTFKDISIDF…EKEGPGDPSS (72 aa)) folds into the KRAB domain. 9 C2H2-type zinc fingers span residues 271-293 (YECN…MRIH), 299-321 (FRCK…QRIH), 327-349 (FECE…HRTH), 355-377 (YVCD…LRTH), 383-405 (FTCN…IRIH), 411-433 (YACT…QRIH), 439-461 (YKCK…KTVH), 467-489 (YECN…QRHH), and 495-517 (YECN…HEIH).

Belongs to the krueppel C2H2-type zinc-finger protein family. As to expression, expressed in visceral and subcutaneous adipose tissue.

The protein localises to the nucleus. Its function is as follows. Putative transcription factor that appears to regulate lipid metabolism. This chain is Zinc finger protein 69 homolog (ZFP69), found in Homo sapiens (Human).